The following is a 406-amino-acid chain: Tyrosine--tRNA ligase (406 aa).

Tyr34 is an L-tyrosine binding site. Residues 39–48 (PTADSLHVGH) carry the 'HIGH' region motif. Tyr167 and Gln171 together coordinate L-tyrosine. A 'KMSKS' region motif is present at residues 227–231 (KMGKT). Residue Lys230 coordinates ATP. The S4 RNA-binding domain occupies 339-404 (RKIVDVLFEA…GKKEYHRLLV (66 aa)).

Belongs to the class-I aminoacyl-tRNA synthetase family. TyrS type 1 subfamily. Homodimer.

The protein localises to the cytoplasm. The enzyme catalyses tRNA(Tyr) + L-tyrosine + ATP = L-tyrosyl-tRNA(Tyr) + AMP + diphosphate + H(+). Its function is as follows. Catalyzes the attachment of tyrosine to tRNA(Tyr) in a two-step reaction: tyrosine is first activated by ATP to form Tyr-AMP and then transferred to the acceptor end of tRNA(Tyr). The sequence is that of Tyrosine--tRNA ligase from Caldanaerobacter subterraneus subsp. tengcongensis (strain DSM 15242 / JCM 11007 / NBRC 100824 / MB4) (Thermoanaerobacter tengcongensis).